The primary structure comprises 164 residues: Seripauperin-21 (164 aa).

Belongs to the SRP1/TIP1 family. Seripauperin subfamily.

The chain is Seripauperin-21 (PAU21) from Saccharomyces cerevisiae (strain ATCC 204508 / S288c) (Baker's yeast).